Reading from the N-terminus, the 255-residue chain is Small ribosomal subunit protein uS2 (255 aa).

Positions 226 to 255 (QGVSNEEVAAEQNIDLDEKEKSEETEATEE) are disordered.

The protein belongs to the universal ribosomal protein uS2 family.

This chain is Small ribosomal subunit protein uS2, found in Staphylococcus aureus (strain JH1).